Here is a 159-residue protein sequence, read N- to C-terminus: Phosphopantetheine adenylyltransferase (159 aa).

Residue Thr10 coordinates substrate. Residues 10–11 and His18 contribute to the ATP site; that span reads TF. 3 residues coordinate substrate: Lys42, Met74, and Arg88. ATP-binding positions include 89 to 91, Glu99, and 124 to 130; these read GLR and WSFISSS.

The protein belongs to the bacterial CoaD family. As to quaternary structure, homohexamer. The cofactor is Mg(2+).

The protein resides in the cytoplasm. It catalyses the reaction (R)-4'-phosphopantetheine + ATP + H(+) = 3'-dephospho-CoA + diphosphate. It participates in cofactor biosynthesis; coenzyme A biosynthesis; CoA from (R)-pantothenate: step 4/5. Reversibly transfers an adenylyl group from ATP to 4'-phosphopantetheine, yielding dephospho-CoA (dPCoA) and pyrophosphate. The protein is Phosphopantetheine adenylyltransferase of Pectobacterium carotovorum subsp. carotovorum (strain PC1).